The sequence spans 213 residues: ATP-dependent dethiobiotin synthetase BioD (213 aa).

Residue 12–17 participates in ATP binding; that stretch reads EVGKTY. T16 serves as a coordination point for Mg(2+). K37 is a catalytic residue. Residues D46, 107 to 110, and 167 to 168 contribute to the ATP site; these read EGVG and NN. Mg(2+)-binding residues include D46 and E107.

It belongs to the dethiobiotin synthetase family. As to quaternary structure, homodimer. The cofactor is Mg(2+).

Its subcellular location is the cytoplasm. It carries out the reaction (7R,8S)-7,8-diammoniononanoate + CO2 + ATP = (4R,5S)-dethiobiotin + ADP + phosphate + 3 H(+). It functions in the pathway cofactor biosynthesis; biotin biosynthesis; biotin from 7,8-diaminononanoate: step 1/2. In terms of biological role, catalyzes a mechanistically unusual reaction, the ATP-dependent insertion of CO2 between the N7 and N8 nitrogen atoms of 7,8-diaminopelargonic acid (DAPA, also called 7,8-diammoniononanoate) to form a ureido ring. This is ATP-dependent dethiobiotin synthetase BioD from Akkermansia muciniphila (strain ATCC BAA-835 / DSM 22959 / JCM 33894 / BCRC 81048 / CCUG 64013 / CIP 107961 / Muc).